The sequence spans 288 residues: Hyaluronidase (288 aa).

An N-linked (GlcNAc...) asparagine glycan is attached at Asn36. Catalysis depends on Glu66, which acts as the Proton donor. A disulfide bridge links Cys142 with Cys154. Asn282 carries N-linked (GlcNAc...) asparagine glycosylation.

This sequence belongs to the glycosyl hydrolase 56 family. As to expression, expressed by the venom gland.

It localises to the secreted. It carries out the reaction Random hydrolysis of (1-&gt;4)-linkages between N-acetyl-beta-D-glucosamine and D-glucuronate residues in hyaluronate.. Its function is as follows. Hydrolyzes high molecular weight hyaluronic acid to produce small oligosaccharides. This chain is Hyaluronidase, found in Polybia paulista (Neotropical social wasp).